Consider the following 388-residue polypeptide: Glutamine transporter 2 (388 aa).

A run of 11 helical transmembrane segments spans residues 5–27, 31–53, 86–106, 121–141, 147–167, 186–206, 218–238, 268–288, 302–322, 326–346, and 368–388; these read LFGS…IPMV, FGLF…AALL, LFYL…ADLI, FAQV…TQII, LLFF…IPGM, TSTI…LVAY, MVIL…YAVV, IILS…VAMA, IVTY…AADQ, VLGY…LAMV, and GGKL…ISQI.

This sequence belongs to the amino acid/polyamine transporter 2 family.

The protein resides in the cell inner membrane. Functionally, seems to be involved in glutamine transport. Complements an E.coli glnP deletion mutant. The sequence is that of Glutamine transporter 2 from Aliivibrio fischeri (strain ATCC 700601 / ES114) (Vibrio fischeri).